Here is a 392-residue protein sequence, read N- to C-terminus: Stilbene synthase 3 (392 aa).

A substrate-binding site is contributed by 55–58 (KFNR). C164 is a catalytic residue. Residues L267 and 305–307 (GGP) each bind substrate.

This sequence belongs to the thiolase-like superfamily. Chalcone/stilbene synthases family. As to quaternary structure, homodimer.

Its subcellular location is the cytoplasm. The catalysed reaction is 4-coumaroyl-CoA + 3 malonyl-CoA + 3 H(+) = trans-resveratrol + 4 CO2 + 4 CoA. The protein operates within phytoalexin biosynthesis; 3,4',5-trihydroxystilbene biosynthesis; 3,4',5-trihydroxystilbene from trans-4-coumarate: step 2/2. Its function is as follows. Mediates resistance to pathogens which are sensitive to stilbenes. In Vitis vinifera (Grape), this protein is Stilbene synthase 3.